Consider the following 87-residue polypeptide: Small ribosomal subunit protein bS20 (87 aa).

Belongs to the bacterial ribosomal protein bS20 family.

Functionally, binds directly to 16S ribosomal RNA. The chain is Small ribosomal subunit protein bS20 from Roseobacter denitrificans (strain ATCC 33942 / OCh 114) (Erythrobacter sp. (strain OCh 114)).